Here is a 145-residue protein sequence, read N- to C-terminus: D-aminoacyl-tRNA deacylase (145 aa).

The Gly-cisPro motif, important for rejection of L-amino acids signature appears at 137–138; sequence GP.

Belongs to the DTD family. Homodimer.

It is found in the cytoplasm. It carries out the reaction glycyl-tRNA(Ala) + H2O = tRNA(Ala) + glycine + H(+). The enzyme catalyses a D-aminoacyl-tRNA + H2O = a tRNA + a D-alpha-amino acid + H(+). Its function is as follows. An aminoacyl-tRNA editing enzyme that deacylates mischarged D-aminoacyl-tRNAs. Also deacylates mischarged glycyl-tRNA(Ala), protecting cells against glycine mischarging by AlaRS. Acts via tRNA-based rather than protein-based catalysis; rejects L-amino acids rather than detecting D-amino acids in the active site. By recycling D-aminoacyl-tRNA to D-amino acids and free tRNA molecules, this enzyme counteracts the toxicity associated with the formation of D-aminoacyl-tRNA entities in vivo and helps enforce protein L-homochirality. This Pseudoalteromonas translucida (strain TAC 125) protein is D-aminoacyl-tRNA deacylase.